Here is a 180-residue protein sequence, read N- to C-terminus: Inner membrane-spanning protein YciB (180 aa).

Transmembrane regions (helical) follow at residues 4–24 (LLSEIGPVIAFFAGFFYGGGI), 25–45 (QSATLYMLITSIICITLCYII), 49–69 (VSKLSIISSTVLFVSGIITLI), 76–96 (IKIKPTILYVIFGIIFLMSGI), 118–138 (IILSYRTAAFFFFMAVVNEVV), and 150–170 (FKVFGVIPITFIFILLQLPLL).

The protein belongs to the YciB family.

Its subcellular location is the cell inner membrane. Its function is as follows. Plays a role in cell envelope biogenesis, maintenance of cell envelope integrity and membrane homeostasis. The sequence is that of Inner membrane-spanning protein YciB from Rickettsia typhi (strain ATCC VR-144 / Wilmington).